The sequence spans 178 residues: MSGGKYVDSEGHLYTVPIREQGNIYKPNNKAMADEMNEKQVYDAHTKEIDLVNRDPKHLNDDVVKIDFEDVIAEPEGTHSFDGIWKASFTTFTVTKYWFYRLLSALFGIPMALIWGIYFAILSFLHIWAVVPCIKSFLIEIQCISRVYSIYVHTFCDPLFEAIGKIFSNVRINLQKEI.

Position 2 is an N-acetylserine (S2). At S2 the chain carries Phosphoserine. Positions 2-94 are required for homooligomerization; that stretch reads SGGKYVDSEG…WKASFTTFTV (93 aa). Topologically, residues 2 to 104 are cytoplasmic; the sequence is SGGKYVDSEG…TKYWFYRLLS (103 aa). The residue at position 5 (K5) is an N6-acetyllysine; alternate. K5 participates in a covalent cross-link: Glycyl lysine isopeptide (Lys-Gly) (interchain with G-Cter in ubiquitin); alternate. Y6 carries the phosphotyrosine modification. The residue at position 9 (S9) is a Phosphoserine. The residue at position 14 (Y14) is a Phosphotyrosine; by ABL1. Y25 is modified (phosphotyrosine). Glycyl lysine isopeptide (Lys-Gly) (interchain with G-Cter in ubiquitin) cross-links involve residues K26, K30, K39, K47, and K57. The interval 82–94 is interaction with CAVIN3; that stretch reads DGIWKASFTTFTV. An intramembrane region (helical) is located at residues 105–125; the sequence is ALFGIPMALIWGIYFAILSFL. Over 126–178 the chain is Cytoplasmic; it reads HIWAVVPCIKSFLIEIQCISRVYSIYVHTFCDPLFEAIGKIFSNVRINLQKEI. The segment at 131–142 is interacts with SPRY1, SPRY2, SPRY3 and SPRY4; the sequence is VPCIKSFLIEIQ. 3 S-palmitoyl cysteine lipidation sites follow: C133, C143, and C156. The interacts with SPRY1, SPRY2, and SPRY4 stretch occupies residues 149–160; it reads SIYVHTFCDPLF. The interacts with SPRY1, SPRY2, SPRY3 and SPRY4 stretch occupies residues 167–178; it reads FSNVRINLQKEI.

It belongs to the caveolin family. As to quaternary structure, homooligomer. Interacts with GLIPR2. Interacts with NOSTRIN. Interacts with SNAP25 and STX1A. Interacts (via the N-terminus) with DPP4; the interaction is direct. Interacts with CTNNB1, CDH1 and JUP. Interacts with PACSIN2; this interaction induces membrane tubulation. Interacts with SLC7A9. Interacts with BMX and BTK. Interacts with TGFBR1. Interacts with CAVIN3 (via leucine-zipper domain) in a cholesterol-sensitive manner. Interacts with CAVIN1. Interacts with EHD2 in a cholesterol-dependent manner. Forms a ternary complex with UBXN6 and VCP; mediates CAV1 targeting to lysosomes for degradation. Interacts with ABCG1; this interaction regulates ABCG1-mediated cholesterol efflux. Interacts with NEU3; this interaction enhances NEU3 sialidase activity within caveola. Interacts (via C-terminus) with SPRY1, SPRY2 (via C-terminus), SPRY3, and SPRY4. Interacts with IGFBP5; this interaction allows trafficking of IGFBP5 from the plasma membrane to the nucleus. Phosphorylated at Tyr-14 by ABL1 in response to oxidative stress. In terms of processing, ubiquitinated. Undergo monoubiquitination and multi- and/or polyubiquitination. Monoubiquitination of N-terminal lysines promotes integration in a ternary complex with UBXN6 and VCP which promotes oligomeric CAV1 targeting to lysosomes for degradation. Ubiquitinated by ZNRF1; leading to degradation and modulation of the TLR4-mediated immune response.

The protein localises to the golgi apparatus membrane. Its subcellular location is the cell membrane. It localises to the membrane. It is found in the caveola. The protein resides in the membrane raft. May act as a scaffolding protein within caveolar membranes. Forms a stable heterooligomeric complex with CAV2 that targets to lipid rafts and drives caveolae formation. Mediates the recruitment of CAVIN proteins (CAVIN1/2/3/4) to the caveolae. Interacts directly with G-protein alpha subunits and can functionally regulate their activity. Involved in the costimulatory signal essential for T-cell receptor (TCR)-mediated T-cell activation. Its binding to DPP4 induces T-cell proliferation and NF-kappa-B activation in a T-cell receptor/CD3-dependent manner. Recruits CTNNB1 to caveolar membranes and may regulate CTNNB1-mediated signaling through the Wnt pathway. Negatively regulates TGFB1-mediated activation of SMAD2/3 by mediating the internalization of TGFBR1 from membrane rafts leading to its subsequent degradation. Binds 20(S)-hydroxycholesterol (20(S)-OHC). This chain is Caveolin-1 (CAV1), found in Equus caballus (Horse).